A 446-amino-acid polypeptide reads, in one-letter code: ATP-dependent protease ATPase subunit HslU (446 aa).

ATP-binding positions include isoleucine 18, glycine 60 to glutamate 65, aspartate 259, glutamate 324, and arginine 396.

The protein belongs to the ClpX chaperone family. HslU subfamily. As to quaternary structure, a double ring-shaped homohexamer of HslV is capped on each side by a ring-shaped HslU homohexamer. The assembly of the HslU/HslV complex is dependent on binding of ATP.

Its subcellular location is the cytoplasm. ATPase subunit of a proteasome-like degradation complex; this subunit has chaperone activity. The binding of ATP and its subsequent hydrolysis by HslU are essential for unfolding of protein substrates subsequently hydrolyzed by HslV. HslU recognizes the N-terminal part of its protein substrates and unfolds these before they are guided to HslV for hydrolysis. This chain is ATP-dependent protease ATPase subunit HslU, found in Vibrio atlanticus (strain LGP32) (Vibrio splendidus (strain Mel32)).